Reading from the N-terminus, the 172-residue chain is Ubiquitin-conjugating enzyme E2 2 (172 aa).

A UBC core domain is found at Pro-4–Glu-150. Cys-88 acts as the Glycyl thioester intermediate in catalysis. Phosphoserine; by SGV1 is present on Ser-120. Positions Val-145–Asp-172 are disordered. Positions Asp-151 to Asp-172 are enriched in acidic residues.

This sequence belongs to the ubiquitin-conjugating enzyme family. Forms a heterodimer complexes with the E3 enzymes BRE1, RAD18 and UBR1. Also interacts with UBR2, RTF1, PAF1 and the RNA polymerase II hyperphosphorylated form. The interaction with RNA polymerase II is BRE1- and PAF1-dependent. Post-translationally, the N-terminus is blocked.

The protein resides in the cytoplasm. Its subcellular location is the nucleus. The catalysed reaction is S-ubiquitinyl-[E1 ubiquitin-activating enzyme]-L-cysteine + [E2 ubiquitin-conjugating enzyme]-L-cysteine = [E1 ubiquitin-activating enzyme]-L-cysteine + S-ubiquitinyl-[E2 ubiquitin-conjugating enzyme]-L-cysteine.. It functions in the pathway protein modification; protein ubiquitination. Its function is as follows. E2 ubiquitin-conjugating enzyme that accepts ubiquitin from the ubiquitin-activating enzyme E1 and transfers it to a E3 ubiquitin-protein ligase. In association with the E3 enzyme BRE1 and LGE1, it plays a role in transcription regulation by catalyzing the monoubiquitination of histone H2B to form H2BK123ub1. H2BK123ub1 gives a specific tag for epigenetic transcriptional activation, elongation by RNA polymerase II, telomeric silencing, and is also a prerequisite for H3K4me and H3K79me formation. In association with the E3 enzyme RAD18, it catalyzes the monoubiquitination of POL30 'Lys-164', involved in postreplication repair of UV-damaged DNA. The RAD6/UBC2-RAD18 complex is also involved in prevention of spontaneous mutations caused by 7,8-dihydro-8-oxoguanine. In association with the E3 enzyme UBR1, is involved in N-end rule-dependent protein degradation. Also involved in sporulation. In Saccharomyces cerevisiae (strain ATCC 204508 / S288c) (Baker's yeast), this protein is Ubiquitin-conjugating enzyme E2 2 (RAD6).